The following is a 717-amino-acid chain: SAGA factor-like TAF6 (717 aa).

Residues 123 to 204 (KSYAGFDPRS…VPPMLGAMDS (82 aa)) form a sufficient for interaction with Taf9 region.

It belongs to the TAF6 family. As to quaternary structure, component of the Spt-Ada-Gcn5 acetyltransferase (SAGA) complex consisting of wda/Taf5L, Saf6, Taf9, Taf10b, Taf12, Ada1, Spt3, Spt7, Spt20, Sf3b3, Sf3b5, Nipped-A/Tra1, a histone acetyltransferase (HAT) module made up of Gcn5, Ada2b (Isoform B), Ada3 and Sgf29, and a deubiquitinase (DUB) module made up of not/nonstop, Sgf11 and e(y)2 tethered to SAGA by Atxn7; not essential for SAGA complex assembly, histone-modifying activity or chromosomal recruitment. Interacts (via N-terminal histone-fold domain) with Taf9 (via N-terminal histone-fold domain); the interaction is probably direct. Probably forms a histone-like heterooctamer structure with Taf9, Taf12 and Taf10b.

The protein localises to the nucleus. Its subcellular location is the chromosome. Its function is as follows. Component of the transcription regulatory complex SAGA, a multiprotein complex that activates transcription by remodeling chromatin and mediating histone acetylation and deubiquitination. The SAGA complex predominantly acetylates histone H3. Involved in SAGA complex coactivator function but not essential for SAGA complex assembly, histone-modifying activity or chromosomal recruitment. Required for oogenesis; involved in transcriptional activation. This is SAGA factor-like TAF6 from Drosophila melanogaster (Fruit fly).